The primary structure comprises 131 residues: Ribonuclease P protein component (131 aa).

This sequence belongs to the RnpA family. In terms of assembly, consists of a catalytic RNA component (M1 or rnpB) and a protein subunit.

It carries out the reaction Endonucleolytic cleavage of RNA, removing 5'-extranucleotides from tRNA precursor.. Functionally, RNaseP catalyzes the removal of the 5'-leader sequence from pre-tRNA to produce the mature 5'-terminus. It can also cleave other RNA substrates such as 4.5S RNA. The protein component plays an auxiliary but essential role in vivo by binding to the 5'-leader sequence and broadening the substrate specificity of the ribozyme. In Stutzerimonas stutzeri (strain A1501) (Pseudomonas stutzeri), this protein is Ribonuclease P protein component.